We begin with the raw amino-acid sequence, 214 residues long: Thiamine-phosphate synthase (214 aa).

Residues 37–41 and Asn73 contribute to the 4-amino-2-methyl-5-(diphosphooxymethyl)pyrimidine site; that span reads QYREK. Mg(2+) contacts are provided by Asp74 and Asp93. Ser112 contributes to the 4-amino-2-methyl-5-(diphosphooxymethyl)pyrimidine binding site. 139 to 141 lines the 2-[(2R,5Z)-2-carboxy-4-methylthiazol-5(2H)-ylidene]ethyl phosphate pocket; that stretch reads TIS. Lys142 serves as a coordination point for 4-amino-2-methyl-5-(diphosphooxymethyl)pyrimidine. Residues Gly171 and 191-192 each bind 2-[(2R,5Z)-2-carboxy-4-methylthiazol-5(2H)-ylidene]ethyl phosphate; that span reads IS.

This sequence belongs to the thiamine-phosphate synthase family. Mg(2+) is required as a cofactor.

It carries out the reaction 2-[(2R,5Z)-2-carboxy-4-methylthiazol-5(2H)-ylidene]ethyl phosphate + 4-amino-2-methyl-5-(diphosphooxymethyl)pyrimidine + 2 H(+) = thiamine phosphate + CO2 + diphosphate. The enzyme catalyses 2-(2-carboxy-4-methylthiazol-5-yl)ethyl phosphate + 4-amino-2-methyl-5-(diphosphooxymethyl)pyrimidine + 2 H(+) = thiamine phosphate + CO2 + diphosphate. The catalysed reaction is 4-methyl-5-(2-phosphooxyethyl)-thiazole + 4-amino-2-methyl-5-(diphosphooxymethyl)pyrimidine + H(+) = thiamine phosphate + diphosphate. It participates in cofactor biosynthesis; thiamine diphosphate biosynthesis; thiamine phosphate from 4-amino-2-methyl-5-diphosphomethylpyrimidine and 4-methyl-5-(2-phosphoethyl)-thiazole: step 1/1. Functionally, condenses 4-methyl-5-(beta-hydroxyethyl)thiazole monophosphate (THZ-P) and 2-methyl-4-amino-5-hydroxymethyl pyrimidine pyrophosphate (HMP-PP) to form thiamine monophosphate (TMP). This is Thiamine-phosphate synthase from Listeria monocytogenes serotype 4b (strain F2365).